A 27-amino-acid chain; its full sequence is Cysteine-rich venom protein tropirin (27 aa).

The protein belongs to the CRISP family. Contains 8 disulfide bonds. In terms of tissue distribution, expressed by the venom gland.

It localises to the secreted. Blocks contraction of smooth muscle elicited by high potassium-induced depolarization, but does not block caffeine-stimulated contraction. May target voltage-gated calcium channels on smooth muscle. This Tropidechis carinatus (Australian rough-scaled snake) protein is Cysteine-rich venom protein tropirin.